Here is a 212-residue protein sequence, read N- to C-terminus: 7-carboxy-7-deazaguanine synthase (212 aa).

Residues 22-24 (LQG) and Arg-37 each bind substrate. One can recognise a Radical SAM core domain in the interval 28-212 (NTGMPAVFVR…VQTHKWAGIE (185 aa)). [4Fe-4S] cluster-binding residues include Cys-41, Cys-45, and Cys-48. Mg(2+) is bound at residue Thr-50. Thr-78 provides a ligand contact to substrate. Residues Gly-80 and 122-124 (SPK) contribute to the S-adenosyl-L-methionine site.

The protein belongs to the radical SAM superfamily. 7-carboxy-7-deazaguanine synthase family. As to quaternary structure, homodimer. Requires [4Fe-4S] cluster as cofactor. S-adenosyl-L-methionine serves as cofactor. Mg(2+) is required as a cofactor.

It carries out the reaction 6-carboxy-5,6,7,8-tetrahydropterin + H(+) = 7-carboxy-7-deazaguanine + NH4(+). It functions in the pathway purine metabolism; 7-cyano-7-deazaguanine biosynthesis. Catalyzes the complex heterocyclic radical-mediated conversion of 6-carboxy-5,6,7,8-tetrahydropterin (CPH4) to 7-carboxy-7-deazaguanine (CDG), a step common to the biosynthetic pathways of all 7-deazapurine-containing compounds. The protein is 7-carboxy-7-deazaguanine synthase of Neisseria meningitidis serogroup B (strain ATCC BAA-335 / MC58).